The following is a 34-amino-acid chain: Photosystem II reaction center protein M (34 aa).

The helical transmembrane segment at 5 to 25 threads the bilayer; that stretch reads ILAFIATALFILVPTAFLLII.

Belongs to the PsbM family. In terms of assembly, PSII is composed of 1 copy each of membrane proteins PsbA, PsbB, PsbC, PsbD, PsbE, PsbF, PsbH, PsbI, PsbJ, PsbK, PsbL, PsbM, PsbT, PsbX, PsbY, PsbZ, Psb30/Ycf12, at least 3 peripheral proteins of the oxygen-evolving complex and a large number of cofactors. It forms dimeric complexes.

The protein localises to the plastid. The protein resides in the chloroplast thylakoid membrane. Functionally, one of the components of the core complex of photosystem II (PSII). PSII is a light-driven water:plastoquinone oxidoreductase that uses light energy to abstract electrons from H(2)O, generating O(2) and a proton gradient subsequently used for ATP formation. It consists of a core antenna complex that captures photons, and an electron transfer chain that converts photonic excitation into a charge separation. This subunit is found at the monomer-monomer interface. The protein is Photosystem II reaction center protein M of Cenchrus americanus (Pearl millet).